The sequence spans 108 residues: Movement protein TGB2 (108 aa).

Over 1–8 the chain is Cytoplasmic; that stretch reads MPLTPPPD. Residues 9–29 traverse the membrane as a helical segment; sequence YTKPFIAVVVGGTLAAFVLLL. Residues 30 to 71 are Lumenal-facing; the sequence is TRNTLPHTGDNLHSLPHGGTYCDGTKRIRYGGPHRSHVPELP. A helical transmembrane segment spans residues 72–92; that stretch reads AKSWALITVVAILIALHFSCL. Over 93-108 the chain is Cytoplasmic; sequence RTHRVHRCVLCHTTSG.

Belongs to the Tymovirales TGBp2 protein family.

It localises to the host endoplasmic reticulum membrane. Its function is as follows. Plays a role in viral cell-to-cell propagation, by facilitating genome transport to neighboring plant cells through plasmosdesmata,. The polypeptide is Movement protein TGB2 (Lily virus X).